A 118-amino-acid polypeptide reads, in one-letter code: DNA-binding protein M164_1799 (118 aa).

It belongs to the PDCD5 family.

In Saccharolobus islandicus (strain M.16.4 / Kamchatka #3) (Sulfolobus islandicus), this protein is DNA-binding protein M164_1799.